The sequence spans 890 residues: Translation initiation factor IF-2 (890 aa).

Residues 45–304 (LIDHLNQKNS…LQQGFQKPAQ (260 aa)) form a disordered region. The segment covering 67–81 (STLNIPGTGGKSKSV) has biased composition (polar residues). Residues 92 to 217 (VKRDPQEAER…RMAEENKWTD (126 aa)) show a composition bias toward basic and acidic residues. Residues 252 to 266 (GRGRNAKAARPKKGN) are compositionally biased toward basic residues. A compositionally biased stretch (basic and acidic residues) spans 267-280 (KHAESKADREEARA). In terms of domain architecture, tr-type G spans 389–558 (PRAPVVTIMG…LLQAEVLELK (170 aa)). The G1 stretch occupies residues 398–405 (GHVDHGKT). 398 to 405 (GHVDHGKT) is a GTP binding site. A G2 region spans residues 423-427 (GITQH). The segment at 444–447 (DTPG) is G3. GTP-binding positions include 444-448 (DTPGH) and 498-501 (NKID). Residues 498 to 501 (NKID) are G4. The G5 stretch occupies residues 534-536 (SAK). K808 carries the post-translational modification N6-acetyllysine.

The protein belongs to the TRAFAC class translation factor GTPase superfamily. Classic translation factor GTPase family. IF-2 subfamily.

The protein resides in the cytoplasm. In terms of biological role, one of the essential components for the initiation of protein synthesis. Protects formylmethionyl-tRNA from spontaneous hydrolysis and promotes its binding to the 30S ribosomal subunits. Also involved in the hydrolysis of GTP during the formation of the 70S ribosomal complex. The protein is Translation initiation factor IF-2 of Escherichia coli (strain SMS-3-5 / SECEC).